The sequence spans 842 residues: Squamosa promoter-binding-like protein 9 (842 aa).

The segment covering 1 to 18 (MDAPGGGGGGGGGGGGVD) has biased composition (gly residues). 3 disordered regions span residues 1-22 (MDAP…AGEP), 59-97 (ALLP…RVRK), and 140-168 (RKKP…TPAE). Positions 69–85 (PAEAEAEAAGPASLPSS) are enriched in low complexity. Positions 146–162 (AGRGSGAAVGGSGGGAS) are enriched in gly residues. An SBP-type; atypical zinc finger spans residues 168–245 (EMKCQVPGCE…ERHNKRRRRK (78 aa)). Zn(2+) is bound by residues C171, C176, C193, C196, C212, C215, H219, and C231. The short motif at 228–244 (KRSCRRKLERHNKRRRR) is the Bipartite nuclear localization signal element. The segment covering 236 to 246 (ERHNKRRRRKP) has biased composition (basic residues). The interval 236–256 (ERHNKRRRRKPDSKGILEKDI) is disordered.

As to expression, ubiquitous.

Its subcellular location is the nucleus. Trans-acting factor that binds specifically to the consensus nucleotide sequence 5'-TNCGTACAA-3'. The sequence is that of Squamosa promoter-binding-like protein 9 (SPL9) from Oryza sativa subsp. japonica (Rice).